A 469-amino-acid polypeptide reads, in one-letter code: Protein DETOXIFICATION 18 (469 aa).

Transmembrane regions (helical) follow at residues 40–60 (LPMI…VMFA), 73–93 (LANS…SGAL), 121–141 (LVFT…FLLL), 152–172 (ALYM…QNIL), 183–203 (PLVL…YALV), 206–226 (AGLG…IAFV), 252–274 (HVVL…YWAF), 293–313 (LVAI…GLSA), 344–364 (VLAL…VGLF), 374–394 (FASL…QGVL), 406–426 (LATV…SVLC), and 438–458 (WIGL…MTIF).

Belongs to the multi antimicrobial extrusion (MATE) (TC 2.A.66.1) family.

It localises to the membrane. In Arabidopsis thaliana (Mouse-ear cress), this protein is Protein DETOXIFICATION 18.